The following is a 740-amino-acid chain: Elongation factor 2 (740 aa).

Residues 23 to 264 enclose the tr-type G domain; sequence AQIRNAGTLA…MIIEHVPPPN (242 aa). GTP contacts are provided by residues 32-39, 98-102, and 152-155; these read AHVDHGKT, DTPGH, and NKID. H605 is subject to Diphthamide.

It belongs to the TRAFAC class translation factor GTPase superfamily. Classic translation factor GTPase family. EF-G/EF-2 subfamily.

The protein localises to the cytoplasm. Its function is as follows. Catalyzes the GTP-dependent ribosomal translocation step during translation elongation. During this step, the ribosome changes from the pre-translocational (PRE) to the post-translocational (POST) state as the newly formed A-site-bound peptidyl-tRNA and P-site-bound deacylated tRNA move to the P and E sites, respectively. Catalyzes the coordinated movement of the two tRNA molecules, the mRNA and conformational changes in the ribosome. This chain is Elongation factor 2, found in Pyrobaculum calidifontis (strain DSM 21063 / JCM 11548 / VA1).